The following is a 277-amino-acid chain: MENTENSVDSKSIKNLEPKIIHGSQSMDSGISLDNSYKMDYPEMGLCIIINNKNFHKSTGMTSRSGTDVDAANLRETFRNLKYEVRNKNDLTREEIVELMRDVSKEDHSKRSSFVCVLLSHGEEGIIFGTNGPVDLKKITNFFRGDRCRSLTGKPKLFIIQACRGTELDCGIETDSGVDDDMACHKIPVEADFLYAYSTAPGYYSWRNSKDGSWFIQSLCAMLKQYADKLEFMHILTRVNRKVATEFESFSFDATFHAKKQIPCIVSMLTKELYFYH.

Methionine 1 bears the N-acetylmethionine mark. 2 consecutive propeptides follow at residues 1–9 (MENTENSVD) and 10–28 (SKSI…QSMD). Residues 1–10 (MENTENSVDS) are compositionally biased toward polar residues. Residues 1–20 (MENTENSVDSKSIKNLEPKI) are disordered. Lysine 11 is subject to N6-acetyllysine. Over residues 11-20 (KSIKNLEPKI) the composition is skewed to basic and acidic residues. A Phosphoserine modification is found at serine 26. Residues histidine 121 and cysteine 163 contribute to the active site. Cysteine 163 bears the S-nitrosocysteine; in inhibited form mark.

This sequence belongs to the peptidase C14A family. As to quaternary structure, heterotetramer that consists of two anti-parallel arranged heterodimers, each one formed by a 17 kDa (p17) and a 12 kDa (p12) subunit. Interacts with BIRC6/bruce. Cleavage by granzyme B, caspase-6, caspase-8 and caspase-10 generates the two active subunits. Additional processing of the propeptides is likely due to the autocatalytic activity of the activated protease. Active heterodimers between the small subunit of caspase-7 protease and the large subunit of caspase-3 also occur and vice versa. Post-translationally, S-nitrosylated on its catalytic site cysteine in unstimulated cell lines and denitrosylated upon activation of the Fas apoptotic pathway, associated with an increase in intracellular caspase activity. Fas therefore activates caspase-3 not only by inducing the cleavage of the caspase zymogen to its active subunits, but also by stimulating the denitrosylation of its active site thiol. In terms of processing, ubiquitinated by BIRC6; this activity is inhibited by DIABLO/SMAC.

It is found in the cytoplasm. The enzyme catalyses Strict requirement for an Asp residue at positions P1 and P4. It has a preferred cleavage sequence of Asp-Xaa-Xaa-Asp-|- with a hydrophobic amino-acid residue at P2 and a hydrophilic amino-acid residue at P3, although Val or Ala are also accepted at this position.. With respect to regulation, inhibited by BIRC6; following inhibition of BIRC6-caspase binding by DIABLO/SMAC, BIRC6 is subjected to caspase cleavage, leading to an increase in active caspases. Functionally, involved in the activation cascade of caspases responsible for apoptosis execution. At the onset of apoptosis, it proteolytically cleaves poly(ADP-ribose) polymerase PARP1 at a '216-Asp-|-Gly-217' bond. Cleaves and activates sterol regulatory element binding proteins (SREBPs) between the basic helix-loop-helix leucine zipper domain and the membrane attachment domain. Cleaves and activates caspase-6, -7 and -9 (CASP6, CASP7 and CASP9, respectively). Cleaves and inactivates interleukin-18 (IL18). Triggers cell adhesion in sympathetic neurons through RET cleavage. Cleaves IL-1 beta between an Asp and an Ala, releasing the mature cytokine which is involved in a variety of inflammatory processes. Cleaves and inhibits serine/threonine-protein kinase AKT1 in response to oxidative stress. Acts as an inhibitor of type I interferon production during virus-induced apoptosis by mediating cleavage of antiviral proteins CGAS, IRF3 and MAVS, thereby preventing cytokine overproduction. Also involved in pyroptosis by mediating cleavage and activation of gasdermin-E (GSDME). Cleaves XRCC4 and phospholipid scramblase proteins XKR4, XKR8 and XKR9, leading to promote phosphatidylserine exposure on apoptotic cell surface. Cleaves BIRC6 following inhibition of BIRC6-caspase binding by DIABLO/SMAC. The chain is Caspase-3 (CASP3) from Pan troglodytes (Chimpanzee).